Consider the following 111-residue polypeptide: MSQSSSDNKCFMVVKFLELPFMDEKNLYYCVHSSWIVHRTQEYVMVAFPLQNELSPSLFDMKYRQVRIGIMEYKTGKCPYEKILYPKIILNNITHFILQYNYLYKKSYILK.

This is an uncharacterized protein from Microplitis demolitor bracovirus (isolate Webb) (MdBV).